The sequence spans 426 residues: D-tagatose-1,6-bisphosphate aldolase subunit KbaZ (426 aa).

The protein belongs to the GatZ/KbaZ family. KbaZ subfamily. Forms a complex with KbaY.

It participates in carbohydrate metabolism; D-tagatose 6-phosphate degradation; D-glyceraldehyde 3-phosphate and glycerone phosphate from D-tagatose 6-phosphate: step 2/2. Its function is as follows. Component of the tagatose-1,6-bisphosphate aldolase KbaYZ that is required for full activity and stability of the Y subunit. Could have a chaperone-like function for the proper and stable folding of KbaY. When expressed alone, KbaZ does not show any aldolase activity. This is D-tagatose-1,6-bisphosphate aldolase subunit KbaZ from Escherichia coli O7:K1 (strain IAI39 / ExPEC).